A 366-amino-acid polypeptide reads, in one-letter code: Spermidine/putrescine import ATP-binding protein PotA (366 aa).

An ABC transporter domain is found at 14-247 (ISARALRKVY…PADRFVADFI (234 aa)). 49 to 56 (GPSGCGKT) contributes to the ATP binding site.

The protein belongs to the ABC transporter superfamily. Spermidine/putrescine importer (TC 3.A.1.11.1) family. The complex is composed of two ATP-binding proteins (PotA), two transmembrane proteins (PotB and PotC) and a solute-binding protein (PotD).

It is found in the cell inner membrane. It catalyses the reaction ATP + H2O + polyamine-[polyamine-binding protein]Side 1 = ADP + phosphate + polyamineSide 2 + [polyamine-binding protein]Side 1.. Its function is as follows. Part of the ABC transporter complex PotABCD involved in spermidine/putrescine import. Responsible for energy coupling to the transport system. This Ruegeria pomeroyi (strain ATCC 700808 / DSM 15171 / DSS-3) (Silicibacter pomeroyi) protein is Spermidine/putrescine import ATP-binding protein PotA.